We begin with the raw amino-acid sequence, 787 residues long: MYKSLFLCLKIFAVLILIGCSVTAYIIYHYSHDLPDYSQLARYYPPSVTRIYSRDGKLIEEYAFERRVFVPINNVPSSLIESFIAAEDKNFYTHPGIDLLGIVRAAFLNISNYLHNRRMEGASTITQQVVKNFLLTNEVSLERKIKEVIISYMISRIFTKHQILELYLNQTFFGRGAYGVAAAAQNYFNKSVEELTIAESAFIAALPKAPSELNPDKNYSRVKARRDYVIERMFEDGYITRDTMKEAIGSPIVLRKRAKEETVTADYYAEQVREEVIRMLNSKEEFYRGGLTIITSLDAKMQQLAENSLRKGLREFDRKSGFRKPIANIPLDNWQEELKKLPTPSSLLEYKLAVVLDVSDNHAKIGLIDGSKAKIPIVEMQWARSNLKSVKTLLKKGDVIVVEPIKDCYALRQIPEVNGAIMVMNPHTGQVLASVGGYDFSTSKFDRVTQALRQPGSLSKTFVYLAALENGVKPNQIFNDGPIEIIQGPGMPSWCPKNYEGQFLGDMTMRTGFEKSRNLITVRVATAVGLTKIVDIIKRFGINNEPKKVYSMVLGSIETTLSRITNAYAIIANGGKKVEPHFVELIQDRNGKIIYRRDNRECFSCNIADSDLDTAILEIPKEDIYRVTDEASNYQITSFLTGAIDSGTGYAARKLGKIIAGKTGTSNDSKDTWFIGFTPKIVVGSYVGYDTPKELGKKATGSNVVLPIFIDFMNHAYKDEPSLPFKVPDSIKLIAVDRITGKMIPNGTVIEAFKVNNIQMLENDYMIDNHDIFDYVPGMLDQSQEIY.

Topologically, residues 1–6 (MYKSLF) are cytoplasmic. Residues 7–27 (LCLKIFAVLILIGCSVTAYII) traverse the membrane as a helical; Signal-anchor for type II membrane protein segment. At 28–787 (YHYSHDLPDY…GMLDQSQEIY (760 aa)) the chain is on the periplasmic side. The transglycosylase stretch occupies residues 49 to 220 (TRIYSRDGKL…SELNPDKNYS (172 aa)). The Proton donor; for transglycosylase activity role is filled by E87. Residues 398-711 (DVIVVEPIKD…SNVVLPIFID (314 aa)) are transpeptidase. Residue S457 is the Acyl-ester intermediate; for transpeptidase activity of the active site.

In the N-terminal section; belongs to the glycosyltransferase 51 family. It in the C-terminal section; belongs to the transpeptidase family.

The protein localises to the cell inner membrane. It carries out the reaction [GlcNAc-(1-&gt;4)-Mur2Ac(oyl-L-Ala-gamma-D-Glu-L-Lys-D-Ala-D-Ala)](n)-di-trans,octa-cis-undecaprenyl diphosphate + beta-D-GlcNAc-(1-&gt;4)-Mur2Ac(oyl-L-Ala-gamma-D-Glu-L-Lys-D-Ala-D-Ala)-di-trans,octa-cis-undecaprenyl diphosphate = [GlcNAc-(1-&gt;4)-Mur2Ac(oyl-L-Ala-gamma-D-Glu-L-Lys-D-Ala-D-Ala)](n+1)-di-trans,octa-cis-undecaprenyl diphosphate + di-trans,octa-cis-undecaprenyl diphosphate + H(+). It catalyses the reaction Preferential cleavage: (Ac)2-L-Lys-D-Ala-|-D-Ala. Also transpeptidation of peptidyl-alanyl moieties that are N-acyl substituents of D-alanine.. Its pathway is cell wall biogenesis; peptidoglycan biosynthesis. Cell wall formation. Synthesis of cross-linked peptidoglycan from the lipid intermediates. The enzyme has a penicillin-insensitive transglycosylase N-terminal domain (formation of linear glycan strands) and a penicillin-sensitive transpeptidase C-terminal domain (cross-linking of the peptide subunits). This Rickettsia prowazekii (strain Madrid E) protein is Penicillin-binding protein 1A (mrcA).